Consider the following 370-residue polypeptide: Putrescine-binding periplasmic protein PotF (370 aa).

The first 26 residues, 1 to 26 (MTALNKKWLSGLVAGALMAVSVGTLA), serve as a signal peptide directing secretion. Residue serine 38 participates in putrescine binding. Cysteine 175 and cysteine 239 are joined by a disulfide. Putrescine contacts are provided by aspartate 247 and aspartate 278.

This sequence belongs to the bacterial solute-binding protein PotD/PotF family. The complex is composed of two ATP-binding proteins (PotG), two transmembrane proteins (PotH and PotI) and a solute-binding protein (PotF).

The protein localises to the periplasm. Its activity is regulated as follows. Transport is feedback inhibited by intracellular polyamines. Part of the ABC transporter complex PotFGHI involved in putrescine uptake. Binds putrescine. Imports putrescine for maintenance of the optimal concentration of polyamines necessary for cell growth in the presence of glucose. This chain is Putrescine-binding periplasmic protein PotF, found in Escherichia coli (strain K12).